Reading from the N-terminus, the 430-residue chain is Histidinol dehydrogenase (430 aa).

Residues tyrosine 130, glutamine 191, and asparagine 214 each contribute to the NAD(+) site. Residues serine 237, glutamine 259, and histidine 262 each coordinate substrate. Zn(2+) contacts are provided by glutamine 259 and histidine 262. Active-site proton acceptor residues include glutamate 327 and histidine 328. Residues histidine 328, aspartate 361, glutamate 415, and histidine 420 each coordinate substrate. Residue aspartate 361 participates in Zn(2+) binding. Histidine 420 contacts Zn(2+).

Belongs to the histidinol dehydrogenase family. It depends on Zn(2+) as a cofactor.

The catalysed reaction is L-histidinol + 2 NAD(+) + H2O = L-histidine + 2 NADH + 3 H(+). Its pathway is amino-acid biosynthesis; L-histidine biosynthesis; L-histidine from 5-phospho-alpha-D-ribose 1-diphosphate: step 9/9. Its function is as follows. Catalyzes the sequential NAD-dependent oxidations of L-histidinol to L-histidinaldehyde and then to L-histidine. The polypeptide is Histidinol dehydrogenase (Brucella abortus (strain 2308)).